An 81-amino-acid polypeptide reads, in one-letter code: Putative truncated GMC-type inactive oxidoreductase R833 (81 aa).

It belongs to the GMC oxidoreductase family.

This chain is Putative truncated GMC-type inactive oxidoreductase R833, found in Acanthamoeba polyphaga mimivirus (APMV).